The following is a 278-amino-acid chain: 4-deoxy-L-threo-5-hexosulose-uronate ketol-isomerase (278 aa).

The Zn(2+) site is built by histidine 196, histidine 198, glutamate 203, and histidine 245.

This sequence belongs to the KduI family. The cofactor is Zn(2+).

The enzyme catalyses 5-dehydro-4-deoxy-D-glucuronate = 3-deoxy-D-glycero-2,5-hexodiulosonate. Its pathway is glycan metabolism; pectin degradation; 2-dehydro-3-deoxy-D-gluconate from pectin: step 4/5. Catalyzes the isomerization of 5-dehydro-4-deoxy-D-glucuronate to 3-deoxy-D-glycero-2,5-hexodiulosonate. This Yersinia pseudotuberculosis serotype O:1b (strain IP 31758) protein is 4-deoxy-L-threo-5-hexosulose-uronate ketol-isomerase.